The following is a 116-amino-acid chain: uncharacterized protein (116 aa).

Helical transmembrane passes span A40–L60 and F72–I92.

It is found in the membrane. This is an uncharacterized protein from Saccharomyces cerevisiae (strain ATCC 204508 / S288c) (Baker's yeast).